Reading from the N-terminus, the 505-residue chain is MSVQVAAPGGLGLGLERPSPEELVRQTRQVVKGLEALRAEHRGLAGHLAEALAAQGPAAGLELLEEKQQVVSHSLEAIELGLGEAQVLLALSAHVGALEAEKQRLRAQARRLAQENAWLREELEETQRRLRASEEAVAQLEEEKSHLEFLGQLRQYDPPAESQQPESPPRRDSLASLFPSEEEERRGPEAVGAAAAQQGGYEIPARLRTLHNLVIQYAGQGRYEVAVPLCRQALEDLERSSGHCHPDVATMLNILALVYRDQNKYKEATDLLHDALQIREQTLGPEHPAVAATLNNLAVLYGKRGRYREAEPLCQRALEIREKVLGADHPDVAKQLNNLALLCQNQGKFEEVERHYARALSIYEALGGPHDPNVAKTKNNLASAYLKQNKYQQAEELYKEILHREALPAPLGAPNTGTTSDTQQQTLSRSSSFSKLRESIRRGSEKLVSRLRGEGAAGAAGMKRAMSLSMLNTDGSRAPENQFPRQHLSEASRTLSTSTQDLGPR.

The tract at residues 1–20 (MSVQVAAPGGLGLGLERPSP) is disordered. Residues 88 to 150 (LLALSAHVGA…EEEKSHLEFL (63 aa)) are a coiled coil. Residues 157 to 193 (DPPAESQQPESPPRRDSLASLFPSEEEERRGPEAVGA) are disordered. Position 173 is a phosphoserine (S173). TPR repeat units lie at residues 207–240 (LRTL…LERS), 249–282 (ATML…REQT), 291–324 (AATL…REKV), 333–366 (AKQL…YEAL), and 375–408 (AKTK…EALP). Residues 409–505 (APLGAPNTGT…STSTQDLGPR (97 aa)) form a disordered region. The segment covering 416-434 (TGTTSDTQQQTLSRSSSFS) has biased composition (low complexity). Residues 435-453 (KLRESIRRGSEKLVSRLRG) are compositionally biased toward basic and acidic residues. At S467 the chain carries Phosphoserine. Residues 489-505 (SEASRTLSTSTQDLGPR) are compositionally biased toward polar residues. A Phosphothreonine modification is found at T499.

It belongs to the kinesin light chain family. Oligomer composed of two heavy chains and two light chains. Associates with microtubulin in an ATP-dependent manner. Interacts with KIF5C. Interacts with ODF1. Interacts with LRGUK. Interacts with VDAC2.

The protein resides in the cytoplasm. It is found in the cytoskeleton. Its subcellular location is the mitochondrion. In terms of biological role, kinesin is a microtubule-associated force-producing protein that may play a role in organelle transport. Plays a role during spermiogenesis in the development of the sperm tail midpiece and in the normal function of spermatozoa. May play a role in the formation of the mitochondrial sheath formation in the developing spermatid midpiece. The sequence is that of Kinesin light chain 3 (KLC3) from Bos taurus (Bovine).